Here is a 125-residue protein sequence, read N- to C-terminus: MPTINQLVRKPRQKVVAKSKVPALESCPQKRGVCTRVYTTTPKKPNSALRKVAKVRLTNGYEVISYIGGEGHNLQEHSVVLLRGGRVKDLPGVRYHMVRGSLDTAGVKDRKQARSKYGAKRPKAA.

A 3-methylthioaspartic acid modification is found at D89. The disordered stretch occupies residues 105–125 (AGVKDRKQARSKYGAKRPKAA). Positions 113–125 (ARSKYGAKRPKAA) are enriched in basic residues.

It belongs to the universal ribosomal protein uS12 family. In terms of assembly, part of the 30S ribosomal subunit. Contacts proteins S8 and S17. May interact with IF1 in the 30S initiation complex.

Functionally, with S4 and S5 plays an important role in translational accuracy. Its function is as follows. Interacts with and stabilizes bases of the 16S rRNA that are involved in tRNA selection in the A site and with the mRNA backbone. Located at the interface of the 30S and 50S subunits, it traverses the body of the 30S subunit contacting proteins on the other side and probably holding the rRNA structure together. The combined cluster of proteins S8, S12 and S17 appears to hold together the shoulder and platform of the 30S subunit. The sequence is that of Small ribosomal subunit protein uS12 from Methylobacillus flagellatus (strain ATCC 51484 / DSM 6875 / VKM B-1610 / KT).